The primary structure comprises 331 residues: Centriolar satellite-associated tubulin polyglutamylase complex regulator 1 (331 aa).

Residues 1–111 (MLSPERLALP…HCLLQLLCPD (111 aa)) are required for interaction with PCM1. Residues 1 to 225 (MLSPERLALP…SCPPPALVKE (225 aa)) form a required for interaction with TPGS1, LRRC49, and TTLL1 region. Residues 112–331 (FPLELTQKAA…STEETDESET (220 aa)) form a required for interaction with TPGS2 region. The segment at 292-331 (SCLPSRTPPRVGSPWKPLHRSRKLDAESDGSTEETDESET) is disordered. Positions 318-331 (ESDGSTEETDESET) are enriched in acidic residues. The residue at position 319 (serine 319) is a Phosphoserine.

The protein belongs to the CSTPP1 family. Interacts with PCM1. Interacts with TTLL1, TPGS1, TPGS2 and LRRC49; the interactions link CSTPP1 to the complex TPGC. Binds to alpha-tubulin.

It localises to the cytoplasm. The protein resides in the cytoskeleton. It is found in the microtubule organizing center. Its subcellular location is the centrosome. The protein localises to the centriolar satellite. Functionally, regulator of the tubulin polyglutamylase complex (TPGC) that controls cytoskeletal organization, nuclear shape, and cilium disassembly by balancing microtubule and actin assembly. Regulates the assembly and stability of the TPGC and thereby modulates polyglutamylation of the microtubule, which antagonizes MAP4 binding. This Rattus norvegicus (Rat) protein is Centriolar satellite-associated tubulin polyglutamylase complex regulator 1 (Cstpp1).